The sequence spans 521 residues: Amidase 1 (521 aa).

Catalysis depends on charge relay system residues K112 and S187. Residues S187 and 208-211 (IGGS) contribute to the substrate site. The active-site Acyl-ester intermediate is the S211.

This sequence belongs to the amidase family.

The catalysed reaction is a monocarboxylic acid amide + H2O = a monocarboxylate + NH4(+). Its pathway is xenobiotic degradation. Amidase; part of the Fusarium detoxification of benzoxazolinone cluster 1 (FDB1) involved in the degradation of benzoxazolinones produced by the host plant. Maize, wheat, and rye produce the 2 benzoxazinone phytoanticipins 2,4-dihy-droxy-7-methoxy-1,4-benzoxazin-3-one (DIMBOA) and 2,4-dihydroxy-1,4-benzoxazin-3-one (DIBOA) that, due to their inherent instability once released, spontaneously degrade to the more stable corresponding benzoxazolinones, 6-methoxy-2-benzoxazolinone (MBOA) and 2-benzoxazolinone (BOA), respectively. The first step in the detoxification of benzoxazolinones involves the hydrolysis of the cyclic ester bond of benzoxazolinones by the FDB1 cluster gamma-lactamase MBL1 to aminophenols. MBL1 is able to convert BOA into 2-aminophenol (2-AP), as well as MBOA into 5-methoxy-2-aminophenol (2-AMP). The FDB2 cluster N-malonyltransferase FDB2/NAT1 then metabolizes aminophenols via N-malonylation to non-toxic malonamic acids. FDB2/NAT1 converts 2-AP into N-(2-hydroxyphenyl) malonamic acid (HPMA) and 2-AMP into N-(2-hydroxy-4-methoxyphenyl) malonamic acid (HMPMA). The duplicated dienlactone hydrolases DLH1 and DLH2 may provide redundant function for hydrolyzing the lactone moiety in the BOA molecule. The roles of the amidases an other enzymes encoded by the 2 FDB clusters have not been identified so far. In Gibberella moniliformis (strain M3125 / FGSC 7600) (Maize ear and stalk rot fungus), this protein is Amidase 1.